The primary structure comprises 98 residues: Large ribosomal subunit protein uL23 (98 aa).

The protein belongs to the universal ribosomal protein uL23 family. As to quaternary structure, part of the 50S ribosomal subunit. Contacts protein L29, and trigger factor when it is bound to the ribosome.

In terms of biological role, one of the early assembly proteins it binds 23S rRNA. One of the proteins that surrounds the polypeptide exit tunnel on the outside of the ribosome. Forms the main docking site for trigger factor binding to the ribosome. The protein is Large ribosomal subunit protein uL23 of Clostridium kluyveri (strain NBRC 12016).